We begin with the raw amino-acid sequence, 315 residues long: UDP-N-acetylenolpyruvoylglucosamine reductase (315 aa).

The region spanning 27–207 (RVGGPADVLY…TKRMNAITAR (181 aa)) is the FAD-binding PCMH-type domain. Arg-172 is an active-site residue. The segment at 214–236 (IREKTSGSTFANPDPPGTPNQRK) is disordered. Residue Ser-221 is the Proton donor of the active site. The active site involves Glu-297.

The protein belongs to the MurB family. Requires FAD as cofactor.

The protein localises to the cytoplasm. It catalyses the reaction UDP-N-acetyl-alpha-D-muramate + NADP(+) = UDP-N-acetyl-3-O-(1-carboxyvinyl)-alpha-D-glucosamine + NADPH + H(+). It participates in cell wall biogenesis; peptidoglycan biosynthesis. Its function is as follows. Cell wall formation. This chain is UDP-N-acetylenolpyruvoylglucosamine reductase, found in Maricaulis maris (strain MCS10) (Caulobacter maris).